Consider the following 584-residue polypeptide: Tricyclene synthase 1e20, chloroplastic (584 aa).

The transit peptide at 1-45 directs the protein to the chloroplast; that stretch reads MIYIWICFYLQTTLLPCSLSTRTKFAICHNTSKLHRAAYKTSRWN. N-linked (GlcNAc...) asparagine glycosylation is found at Asn-30, Asn-209, and Asn-322. 2 residues coordinate Mg(2+): Asp-341 and Asp-345. The short motif at 341–345 is the DDXXD motif element; the sequence is DDIFD. N-linked (GlcNAc...) asparagine glycans are attached at residues Asn-387 and Asn-468. Residues Asn-485, Ser-489, and Glu-493 each contribute to the Mg(2+) site. Asn-512 is a glycosylation site (N-linked (GlcNAc...) asparagine).

The protein belongs to the terpene synthase family. Tpsg subfamily. Requires Mg(2+) as cofactor. It depends on Mn(2+) as a cofactor. In terms of tissue distribution, accumulates at low levels in flowers; mostly expressed in both upper and lower petal lobes, and, to a lower extent, in tube and stamens.

It localises to the plastid. The protein resides in the chloroplast stroma. It carries out the reaction (2E)-geranyl diphosphate = tricyclene + diphosphate. The enzyme catalyses (2E)-geranyl diphosphate = beta-myrcene + diphosphate. It functions in the pathway secondary metabolite biosynthesis; terpenoid biosynthesis. May contribute to floral scent emission. This is Tricyclene synthase 1e20, chloroplastic (1e20) from Antirrhinum majus (Garden snapdragon).